Reading from the N-terminus, the 134-residue chain is Arginine decarboxylase proenzyme (134 aa).

The Schiff-base intermediate with substrate; via pyruvic acid role is filled by Ser-82. Ser-82 is subject to Pyruvic acid (Ser); by autocatalysis. Residue His-87 is the Proton acceptor; for processing activity of the active site. Catalysis depends on Cys-102, which acts as the Proton donor; for catalytic activity.

Belongs to the prokaryotic AdoMetDC family. Type 1 subfamily. As to quaternary structure, heterooctamer of four alpha and four beta chains arranged as a tetramer of alpha/beta heterodimers. The cofactor is pyruvate. Is synthesized initially as an inactive proenzyme. Formation of the active enzyme involves a self-maturation process in which the active site pyruvoyl group is generated from an internal serine residue via an autocatalytic post-translational modification. Two non-identical subunits are generated from the proenzyme in this reaction, and the pyruvate is formed at the N-terminus of the alpha chain, which is derived from the carboxyl end of the proenzyme. The post-translation cleavage follows an unusual pathway, termed non-hydrolytic serinolysis, in which the side chain hydroxyl group of the serine supplies its oxygen atom to form the C-terminus of the beta chain, while the remainder of the serine residue undergoes an oxidative deamination to produce ammonia and the pyruvoyl group blocking the N-terminus of the alpha chain.

It catalyses the reaction L-arginine + H(+) = agmatine + CO2. It participates in amine and polyamine biosynthesis; agmatine biosynthesis; agmatine from L-arginine: step 1/1. Functionally, specifically catalyzes the decarboxylation of L-arginine to agmatine. Has no S-adenosylmethionine decarboxylase (AdoMetDC) activity. In Caldivirga maquilingensis (strain ATCC 700844 / DSM 13496 / JCM 10307 / IC-167), this protein is Arginine decarboxylase proenzyme.